Here is a 424-residue protein sequence, read N- to C-terminus: Dihydroorotase (424 aa).

Residues His61 and His63 each coordinate Zn(2+). Residues 63-65 (HLR) and Asn95 each bind substrate. Asp153, His180, and His233 together coordinate Zn(2+). Asn279 lines the substrate pocket. Asp306 serves as a coordination point for Zn(2+). Asp306 is an active-site residue. His310 contributes to the substrate binding site.

It belongs to the metallo-dependent hydrolases superfamily. DHOase family. Class I DHOase subfamily. Zn(2+) is required as a cofactor.

The catalysed reaction is (S)-dihydroorotate + H2O = N-carbamoyl-L-aspartate + H(+). It participates in pyrimidine metabolism; UMP biosynthesis via de novo pathway; (S)-dihydroorotate from bicarbonate: step 3/3. Functionally, catalyzes the reversible cyclization of carbamoyl aspartate to dihydroorotate. This Citrifermentans bemidjiense (strain ATCC BAA-1014 / DSM 16622 / JCM 12645 / Bem) (Geobacter bemidjiensis) protein is Dihydroorotase.